We begin with the raw amino-acid sequence, 547 residues long: Chaperonin GroEL (547 aa).

Residues 30–33, K51, 87–91, G415, 479–481, and D495 contribute to the ATP site; these read TLGP, DGTTT, and NAA. The tract at residues 525-547 is disordered; it reads PKEDKPDLGGGNPGGAGGMGGMM. Gly residues predominate over residues 532 to 547; it reads LGGGNPGGAGGMGGMM.

The protein belongs to the chaperonin (HSP60) family. In terms of assembly, forms a cylinder of 14 subunits composed of two heptameric rings stacked back-to-back. Interacts with the co-chaperonin GroES.

The protein localises to the cytoplasm. The enzyme catalyses ATP + H2O + a folded polypeptide = ADP + phosphate + an unfolded polypeptide.. In terms of biological role, together with its co-chaperonin GroES, plays an essential role in assisting protein folding. The GroEL-GroES system forms a nano-cage that allows encapsulation of the non-native substrate proteins and provides a physical environment optimized to promote and accelerate protein folding. The chain is Chaperonin GroEL from Blochmanniella floridana.